The chain runs to 310 residues: Transcription factor RAX3 (310 aa).

2 consecutive HTH myb-type domains span residues 9 to 62 (KANV…LNYL) and 63 to 117 (RPNI…KKKL). 2 DNA-binding regions (H-T-H motif) span residues 38–62 (WIALPQKIGLKRCGKSCRLRWLNYL) and 90–113 (WSIIAAQLPGRTDNDIKNYWNTRL).

Ubiquitous.

It is found in the nucleus. Transcription activator. Positively regulates axillary meristems (AMs) formation and development, especially during inflorescence. This Arabidopsis thaliana (Mouse-ear cress) protein is Transcription factor RAX3 (RAX3).